The following is a 519-amino-acid chain: DDB1- and CUL4-associated factor 17 (519 aa).

2 helical membrane-spanning segments follow: residues 186 to 206 and 222 to 242; these read VLLY…ILEI and GILI…QAII.

As to quaternary structure, interacts with DDB1, CUL4A and CUL4B. As to expression, ubiquitously expressed in the embryo, with higher expression in brain, liver and skin tissues.

The protein localises to the membrane. Its subcellular location is the nucleus. The protein resides in the nucleolus. The protein operates within protein modification; protein ubiquitination. Functionally, may function as a substrate receptor for CUL4-DDB1 E3 ubiquitin-protein ligase complex. The polypeptide is DDB1- and CUL4-associated factor 17 (Dcaf17) (Mus musculus (Mouse)).